The sequence spans 403 residues: MEQPSVESLLELRRFPRKQLSLILLLLYSPLGLCLFLIRLFIGAHVFLVSCVLPDSVFRRFLLRVMSSVLGVYVSHSALRPLERRGKILICNHRTDFDHNIISLIAPCCSPSLSCAPGFLCWARGFLELGALGSRTQLMESLKHYLSQPGGGPLLLFPEEETTSGRTGLLHFSSWPFSLSDSVQPLTLTVQRPLVAAAVSGCSWVTELFWLLFIPFTVYQVRWLPPVTRHTRESDEEFAFRVQQMMAGSLGVAATRHTGADRAEYLKRRRTELPRSAPRSVPLSPTQMQMAQHVKEVLPQVPLSAIHRDLGHTGCIDTTITNFLEGRVTFLPEEETLGGNEATERTPLDRISRPLPRGFAKSPEVRHLSLQERKEALYECARRKYLEKFGSVGREEEEKGARG.

The Cytoplasmic segment spans residues 1–21 (MEQPSVESLLELRRFPRKQLS). Residues 22–42 (LILLLLYSPLGLCLFLIRLFI) lie within the membrane without spanning it. The Cytoplasmic portion of the chain corresponds to 43–399 (GAHVFLVSCV…GSVGREEEEK (357 aa)). Residues 286-328 (TQMQMAQHVKEVLPQVPLSAIHRDLGHTGCIDTTITNFLEGRV) enclose the CUE domain.

The protein belongs to the AUP1 family.

The protein resides in the endoplasmic reticulum membrane. The protein localises to the lipid droplet. Plays a role in the translocation of terminally misfolded proteins from the endoplasmic reticulum lumen to the cytoplasm and their degradation by the proteasome. Plays a role in lipid droplet formation. Induces lipid droplet clustering. The polypeptide is Lipid droplet-regulating VLDL assembly factor AUP1 (Xenopus tropicalis (Western clawed frog)).